We begin with the raw amino-acid sequence, 1381 residues long: DNA-directed RNA polymerase subunit beta (1381 aa).

This sequence belongs to the RNA polymerase beta chain family. The RNAP catalytic core consists of 2 alpha, 1 beta, 1 beta' and 1 omega subunit. When a sigma factor is associated with the core the holoenzyme is formed, which can initiate transcription.

The catalysed reaction is RNA(n) + a ribonucleoside 5'-triphosphate = RNA(n+1) + diphosphate. In terms of biological role, DNA-dependent RNA polymerase catalyzes the transcription of DNA into RNA using the four ribonucleoside triphosphates as substrates. This chain is DNA-directed RNA polymerase subunit beta, found in Sulfurimonas denitrificans (strain ATCC 33889 / DSM 1251) (Thiomicrospira denitrificans (strain ATCC 33889 / DSM 1251)).